The primary structure comprises 669 residues: Trifunctional UDP-glucose 4,6-dehydratase/UDP-4-keto-6-deoxy-D-glucose 3,5-epimerase/UDP-4-keto-L-rhamnose-reductase RHM1 (669 aa).

An NAD(+)-binding site is contributed by 13–19 (GAAGFIA). Threonine 132 is a binding site for substrate. Residue aspartate 133 is the Proton donor of the active site. Catalysis depends on proton acceptor residues glutamate 134 and tyrosine 159. 391 to 397 (GKTGWIG) contacts NADP(+).

In the N-terminal section; belongs to the NAD(P)-dependent epimerase/dehydratase family. dTDP-glucose dehydratase subfamily. It in the C-terminal section; belongs to the dTDP-4-dehydrorhamnose reductase family. The cofactor is NAD(+). NADP(+) serves as cofactor. As to expression, expressed in roots, stems, leaves, seedlings, inflorescence tips, and siliques. Detected in the adaxial side of cotyledons, in the emerging leaves and in trichomes. Also detected in the root tip, more precisely in the epidermal cells in the meristematic and elongation zone.

The protein localises to the cytoplasm. It is found in the cytosol. It carries out the reaction UDP-alpha-D-glucose = UDP-4-dehydro-6-deoxy-alpha-D-glucose + H2O. The protein operates within carbohydrate biosynthesis. Functionally, trifunctional enzyme involved in UDP-beta-L-rhamnose biosynthesis, a precursor of the primary cell wall components rhamnogalacturonan I (RG-I) and rhamnogalacturonan II (RG-II). Plays a major role in supplying UDP-rhamnose for flavonol biosynthesis. Catalyzes the dehydration of UDP-glucose to form UDP-4-dehydro-6-deoxy-D-glucose followed by the epimerization of the C3' and C5' positions of UDP-4-dehydro-6-deoxy-D-glucose to form UDP-4-keto-beta-L-rhamnose and the reduction of UDP-4-keto-beta-L-rhamnose to yield UDP-beta-L-rhamnose. This is Trifunctional UDP-glucose 4,6-dehydratase/UDP-4-keto-6-deoxy-D-glucose 3,5-epimerase/UDP-4-keto-L-rhamnose-reductase RHM1 from Arabidopsis thaliana (Mouse-ear cress).